A 102-amino-acid polypeptide reads, in one-letter code: NADH-quinone oxidoreductase subunit K 1 (102 aa).

The next 3 helical transmembrane spans lie at Leu5–Val25, Ile30–Gly50, and Val62–Val82.

The protein belongs to the complex I subunit 4L family. NDH-1 is composed of 14 different subunits. Subunits NuoA, H, J, K, L, M, N constitute the membrane sector of the complex.

The protein resides in the cell inner membrane. It carries out the reaction a quinone + NADH + 5 H(+)(in) = a quinol + NAD(+) + 4 H(+)(out). Its function is as follows. NDH-1 shuttles electrons from NADH, via FMN and iron-sulfur (Fe-S) centers, to quinones in the respiratory chain. The immediate electron acceptor for the enzyme in this species is believed to be ubiquinone. Couples the redox reaction to proton translocation (for every two electrons transferred, four hydrogen ions are translocated across the cytoplasmic membrane), and thus conserves the redox energy in a proton gradient. The protein is NADH-quinone oxidoreductase subunit K 1 of Geotalea uraniireducens (strain Rf4) (Geobacter uraniireducens).